We begin with the raw amino-acid sequence, 344 residues long: Nuclear distribution protein nudE homolog 1 (344 aa).

The tract at residues 1–93 (MEDSGKTFGS…MQHSEGYRQI (93 aa)) is self-association. Residues 18-188 (WRDLAMTYKQ…ELAVQQKQDK (171 aa)) adopt a coiled-coil conformation. Over residues 30–47 (ENTQEELREFQEGSREYE) the composition is skewed to basic and acidic residues. The disordered stretch occupies residues 30-65 (ENTQEELREFQEGSREYEAELETQLQQAETRNRDLL). The interaction with PAFAH1B1 stretch occupies residues 88 to 156 (EGYRQISALE…ERNAFLESEL (69 aa)). Residues 167-290 (QRLKDEARDL…QSPSRKSGPA (124 aa)) form an interaction with CENPF region. Residues 181–243 (AVQQKQDKPR…CGLGSPSSGT (63 aa)) are disordered. Over residues 208–230 (ATGSAPSTPITHQGSSSGLNTPE) the composition is skewed to polar residues. A Phosphoserine modification is found at Ser-211. Phosphothreonine is present on residues Thr-215, Thr-228, Thr-243, and Thr-246. Cys-274 carries the S-palmitoyl cysteine; by ZDHHC2, ZDHHC3 and ZDHHC7 lipid modification. The interval 279–337 (YDQSPSRKSGPALGRGTKNRDGIDRRPGSTAVGDKGSGKRLEFAKPSSQLSSPALPSTQ) is disordered. Residue Ser-282 is modified to Phosphoserine. A compositionally biased stretch (basic and acidic residues) spans 296–305 (KNRDGIDRRP). The span at 324–335 (PSSQLSSPALPS) shows a compositional bias: low complexity.

This sequence belongs to the nudE family. As to quaternary structure, homodimer. Interacts with CNTRL, LIS1, dynein, SLMAP and TCP1. Interacts with CENPF, dynactin, tubulin gamma, PAFAH1B1, PCM1 and PCNT. Interacts with ZNF365. Interacts with GTP-bound RAB9A and RAB9B; the interaction leads to RAB9-dynein motor tethering. Interacts (via C-terminus) with MCRS1 (via C-terminus); phosphorylation of NDE1 inhibits the interaction. Phosphorylated in mitosis. Phosphorylation at Thr-246 is essential for the G2/M transition. Expressed in brain, heart, kidney, liver, lung, skeletal muscle, spleen and testis.

The protein resides in the cytoplasm. The protein localises to the cytoskeleton. It localises to the microtubule organizing center. It is found in the centrosome. Its subcellular location is the spindle. The protein resides in the chromosome. The protein localises to the centromere. It localises to the kinetochore. It is found in the cleavage furrow. Its subcellular location is the cytoplasmic vesicle membrane. Functionally, required for centrosome duplication and formation and function of the mitotic spindle. Essential for the development of the cerebral cortex. May regulate the production of neurons by controlling the orientation of the mitotic spindle during division of cortical neuronal progenitors of the proliferative ventricular zone of the brain. Orientation of the division plane perpendicular to the layers of the cortex gives rise to two proliferative neuronal progenitors whereas parallel orientation of the division plane yields one proliferative neuronal progenitor and a postmitotic neuron. A premature shift towards a neuronal fate within the progenitor population may result in an overall reduction in the final number of neurons and an increase in the number of neurons in the deeper layers of the cortex. Acts as a RAB9A/B effector that tethers RAB9-associated late endosomes to the dynein motor for their retrograde transport to the trans-Golgi network. The sequence is that of Nuclear distribution protein nudE homolog 1 from Rattus norvegicus (Rat).